The sequence spans 502 residues: UDP-N-acetylmuramoylalanine--D-glutamate ligase (502 aa).

Gly-129 to Thr-135 contributes to the ATP binding site. The interval Ala-288 to Ile-307 is disordered.

This sequence belongs to the MurCDEF family.

The protein resides in the cytoplasm. It catalyses the reaction UDP-N-acetyl-alpha-D-muramoyl-L-alanine + D-glutamate + ATP = UDP-N-acetyl-alpha-D-muramoyl-L-alanyl-D-glutamate + ADP + phosphate + H(+). It participates in cell wall biogenesis; peptidoglycan biosynthesis. In terms of biological role, cell wall formation. Catalyzes the addition of glutamate to the nucleotide precursor UDP-N-acetylmuramoyl-L-alanine (UMA). This Burkholderia ambifaria (strain ATCC BAA-244 / DSM 16087 / CCUG 44356 / LMG 19182 / AMMD) (Burkholderia cepacia (strain AMMD)) protein is UDP-N-acetylmuramoylalanine--D-glutamate ligase.